The chain runs to 413 residues: 2,3-bisphosphoglycerate-independent phosphoglycerate mutase (413 aa).

Belongs to the BPG-independent phosphoglycerate mutase family. A-PGAM subfamily.

The enzyme catalyses (2R)-2-phosphoglycerate = (2R)-3-phosphoglycerate. It participates in carbohydrate degradation; glycolysis; pyruvate from D-glyceraldehyde 3-phosphate: step 3/5. Functionally, catalyzes the interconversion of 2-phosphoglycerate and 3-phosphoglycerate. This Sulfolobus acidocaldarius (strain ATCC 33909 / DSM 639 / JCM 8929 / NBRC 15157 / NCIMB 11770) protein is 2,3-bisphosphoglycerate-independent phosphoglycerate mutase.